Here is a 1067-residue protein sequence, read N- to C-terminus: Protein CLEC16A homolog (1067 aa).

Positions 50–199 (LRCIAEILIW…AVRTISLNVY (150 aa)) constitute an FPL domain. Residues 333 to 353 (SIVALFLLSLVFLVVSHAPLV) traverse the membrane as a helical segment. A compositionally biased stretch (low complexity) spans 409-418 (SSSSYALSED). Disordered regions lie at residues 409-434 (SSSS…LDSQ), 837-861 (ASSS…PMFS), 876-993 (SNSA…SRSH), and 1037-1067 (QSSE…IETV). Residues 421–432 (VESSSPATTELD) are compositionally biased toward polar residues. The span at 876–888 (SNSAGVSRTQMAP) shows a compositional bias: polar residues. Basic and acidic residues predominate over residues 917–926 (RADHSDRERS). Over residues 927–947 (PSVSMGSHSSSQSRENSQPRS) the composition is skewed to low complexity. Positions 951-974 (RSRESSPRMPRPRSEEIPLEDFQH) are enriched in basic and acidic residues. Positions 975–993 (SRNNSPHSRGNPSPASRSH) are enriched in polar residues. Basic and acidic residues predominate over residues 1057–1067 (EGRRRGAIETV).

It belongs to the CLEC16A/gop-1 family. As to quaternary structure, interacts with the class C Vps-HOPS complex components; Car, Dor and Vps16a.

The protein resides in the cytoplasmic vesicle. It is found in the autophagosome membrane. Its subcellular location is the late endosome membrane. It localises to the golgi apparatus membrane. Functionally, required for mitophagy, autophagy and endosome maturation, possibly by acting in multiple membrane trafficking pathways. Required for endosome trafficking and maturation. Functions with the class C Vps-HOPS complex member Vps16a to promote endosomal maturation into degradative late endosomes and lysosomes. In response to starvation, functions at an early stage of autophagy to promote autophagosome growth and efficient autophagy. Essential for the recruitment of lva-positive Golgi elements to autophagosomes. Likely to function by promoting membrane traffic from the Golgi complex to the developing autophagosomes. Also regulates synaptic growth at the neuromuscular junctions (NMJ) by down-regulating BMP signaling. The polypeptide is Protein CLEC16A homolog (Drosophila melanogaster (Fruit fly)).